The sequence spans 1076 residues: Carbamoyl phosphate synthase large chain (1076 aa).

The interval 1 to 403 (MPKRTDIQSI…SLQKALRGLE (403 aa)) is carboxyphosphate synthetic domain. ATP-binding residues include arginine 129, arginine 169, glycine 175, glycine 176, glutamate 208, leucine 210, glutamate 215, glycine 241, isoleucine 242, histidine 243, glutamine 285, and glutamate 299. Residues 133 to 328 (DKAMKSIGLE…IAKVAAKLAV (196 aa)) enclose the ATP-grasp 1 domain. Mg(2+) contacts are provided by glutamine 285, glutamate 299, and asparagine 301. Mn(2+) contacts are provided by glutamine 285, glutamate 299, and asparagine 301. Residues 404–553 (VGAAGLDEKV…YSTYDEECEA (150 aa)) form an oligomerization domain region. Positions 554-935 (NPTDKDKIMV…AYAKAELGCG (382 aa)) are carbamoyl phosphate synthetic domain. The ATP-grasp 2 domain maps to 678-869 (QQAVQRLGLK…LAKIAARVMV (192 aa)). The ATP site is built by arginine 714, arginine 753, leucine 755, glutamate 760, glycine 785, valine 786, histidine 787, serine 788, glutamine 828, and glutamate 840. Mg(2+) is bound by residues glutamine 828, glutamate 840, and asparagine 842. Positions 828, 840, and 842 each coordinate Mn(2+). The region spanning 936–1076 (SVYPEGGRAL…LHARVKANQA (141 aa)) is the MGS-like domain. Residues 936–1076 (SVYPEGGRAL…LHARVKANQA (141 aa)) form an allosteric domain region.

The protein belongs to the CarB family. As to quaternary structure, composed of two chains; the small (or glutamine) chain promotes the hydrolysis of glutamine to ammonia, which is used by the large (or ammonia) chain to synthesize carbamoyl phosphate. Tetramer of heterodimers (alpha,beta)4. Requires Mg(2+) as cofactor. The cofactor is Mn(2+).

The catalysed reaction is hydrogencarbonate + L-glutamine + 2 ATP + H2O = carbamoyl phosphate + L-glutamate + 2 ADP + phosphate + 2 H(+). The enzyme catalyses hydrogencarbonate + NH4(+) + 2 ATP = carbamoyl phosphate + 2 ADP + phosphate + 2 H(+). The protein operates within amino-acid biosynthesis; L-arginine biosynthesis; carbamoyl phosphate from bicarbonate: step 1/1. Its pathway is pyrimidine metabolism; UMP biosynthesis via de novo pathway; (S)-dihydroorotate from bicarbonate: step 1/3. Functionally, large subunit of the glutamine-dependent carbamoyl phosphate synthetase (CPSase). CPSase catalyzes the formation of carbamoyl phosphate from the ammonia moiety of glutamine, carbonate, and phosphate donated by ATP, constituting the first step of 2 biosynthetic pathways, one leading to arginine and/or urea and the other to pyrimidine nucleotides. The large subunit (synthetase) binds the substrates ammonia (free or transferred from glutamine from the small subunit), hydrogencarbonate and ATP and carries out an ATP-coupled ligase reaction, activating hydrogencarbonate by forming carboxy phosphate which reacts with ammonia to form carbamoyl phosphate. This is Carbamoyl phosphate synthase large chain from Vibrio cholerae serotype O1 (strain ATCC 39315 / El Tor Inaba N16961).